The chain runs to 358 residues: MKMTFRWYGEGNDSITLKQIKQIPGCSGLMGVIDQYAAGEVWEESVIAEYVEHVHKAGLEVEVIESVNVHEDIKLGLPSRELYIENYIKTIRNLAKHGIKVIVYNFMPVLDWLRTDLARVIEEDGSNSLYYDEEELLGLTPLQIVENTSKSSNGFTLPGWEPERLKELENVLALYKNIDPDKLRENYKYFLEKVIPVCEECGVKMAVHPDDPAWPIFGLPRIAHSEELFDKILELYDSESHTICLCTGSLGSNPENNIPEIIRHFGGKNRVGCFHVRNVKYLGYRKFRESSHLSSDGSLDMFEIMKAIHETAPDTYIRPDHGRMIWDEVGRPGYGLYDRALGIAYLNGIWEALEKSSK.

It belongs to the mannonate dehydratase family. The cofactor is Fe(2+). It depends on Mn(2+) as a cofactor.

It catalyses the reaction D-mannonate = 2-dehydro-3-deoxy-D-gluconate + H2O. It functions in the pathway carbohydrate metabolism; pentose and glucuronate interconversion. Catalyzes the dehydration of D-mannonate. This Lachnoclostridium phytofermentans (strain ATCC 700394 / DSM 18823 / ISDg) (Clostridium phytofermentans) protein is Mannonate dehydratase.